The sequence spans 351 residues: Inositol monophosphatase 3 (351 aa).

The chain crosses the membrane as a helical span at residues 11-31 (LGIGVFCLLALGVLYHVYSGF). The Mg(2+) site is built by Glu-121, Asp-162, Leu-164, Asp-165, and Asp-288. Glu-121 is a binding site for substrate. Residues 164–167 (LDAT) and Asp-288 each bind substrate.

Belongs to the inositol monophosphatase superfamily. Mg(2+) serves as cofactor.

Its subcellular location is the membrane. It catalyses the reaction a myo-inositol phosphate + H2O = myo-inositol + phosphate. Its pathway is polyol metabolism; myo-inositol biosynthesis; myo-inositol from D-glucose 6-phosphate: step 2/2. The protein is Inositol monophosphatase 3 (bpnt2) of Xenopus laevis (African clawed frog).